Here is a 1870-residue protein sequence, read N- to C-terminus: Dedicator of cytokinesis protein 5 (1870 aa).

An SH3 domain is found at 8–69 (KRQKYGVAIY…PETYIHLKEA (62 aa)). Ser-365 bears the Phosphoserine mark. Positions 443-627 (RNDIYVTLIH…DSFQIATLIC (185 aa)) constitute a C2 DOCK-type domain. Lys-818 bears the N6-acetyllysine mark. Positions 1231–1642 (YKEKKREDIY…VEKHYGVITL (412 aa)) constitute a DOCKER domain. The disordered stretch occupies residues 1679–1702 (VVSTSSNSSDNAPSRPGSDGSILE). 4 positions are modified to phosphoserine: Ser-1756, Ser-1766, Ser-1785, and Ser-1789. The disordered stretch occupies residues 1772 to 1870 (NRLSPFHGSS…GIPTSEPGSQ (99 aa)). Over residues 1784–1794 (QSTPLSPPPLT) the composition is skewed to pro residues. Phosphothreonine is present on Thr-1794. Residues 1797–1808 (ATRTLSSPSLQT) are compositionally biased toward polar residues. Residue Thr-1814 is modified to Phosphothreonine. Residues 1815–1824 (PVPPPPPPKS) are compositionally biased toward pro residues. A phosphoserine mark is found at Ser-1834 and Ser-1869.

Belongs to the DOCK family. In terms of assembly, interacts with CRK and CRKL. Interacts (via N-terminus) with tensin TNS3 (via N-terminus); the interaction increases DOCK5 guanine nucleotide exchange activity towards Rac. Interacts with ELMO1.

The protein resides in the cytoplasm. The protein localises to the cell membrane. Its subcellular location is the cell projection. It is found in the podosome. Its function is as follows. Guanine nucleotide exchange factor (GEF) for Rho and Rac. GEF proteins activate small GTPases by exchanging bound GDP for free GTP. Along with DOCK1, mediates CRK/CRKL regulation of epithelial and endothelial cell spreading and migration on type IV collagen. In Homo sapiens (Human), this protein is Dedicator of cytokinesis protein 5 (DOCK5).